The primary structure comprises 331 residues: Putative lipoprotein YerB (331 aa).

A signal peptide spans 1 to 19 (MKKWMTVCALCFVFFLLVS). C20 carries the N-palmitoyl cysteine lipid modification. The S-diacylglycerol cysteine moiety is linked to residue C20. Phosphothreonine is present on T97. S103 bears the Phosphoserine mark.

In terms of assembly, interacts with PcrA. The interaction is not essential for cell viability or repair of UV-induced lesions.

The protein resides in the cell membrane. This chain is Putative lipoprotein YerB (yerB), found in Bacillus subtilis (strain 168).